We begin with the raw amino-acid sequence, 264 residues long: uncharacterized protein (264 aa).

Residues 7 to 27 traverse the membrane as a helical segment; the sequence is LTLGICLVLLIILIVGYVIMT.

This sequence belongs to the staphylococcal tandem lipoprotein family.

It localises to the cell membrane. This is an uncharacterized protein from Staphylococcus aureus (strain MW2).